The following is a 429-amino-acid chain: Chaperone SurA (429 aa).

Positions 1–18 (MFKRIALVCALFSGVCFA) are cleaved as a signal peptide. PpiC domains follow at residues 170–271 (NLTY…KLVA) and 281–380 (ITQT…EVIA).

The protein resides in the periplasm. The catalysed reaction is [protein]-peptidylproline (omega=180) = [protein]-peptidylproline (omega=0). Functionally, chaperone involved in the correct folding and assembly of outer membrane proteins. Recognizes specific patterns of aromatic residues and the orientation of their side chains, which are found more frequently in integral outer membrane proteins. May act in both early periplasmic and late outer membrane-associated steps of protein maturation. The polypeptide is Chaperone SurA (Legionella pneumophila subsp. pneumophila (strain Philadelphia 1 / ATCC 33152 / DSM 7513)).